A 447-amino-acid polypeptide reads, in one-letter code: Signal recognition particle 54 kDa protein (447 aa).

GTP is bound by residues 103-110 (GVQGSGKT), 185-189 (DTAGR), and 245-248 (TKMD).

Belongs to the GTP-binding SRP family. SRP54 subfamily. Part of the signal recognition particle protein translocation system, which is composed of SRP and FtsY. Archaeal SRP consists of a 7S RNA molecule of 300 nucleotides and two protein subunits: SRP54 and SRP19.

The protein localises to the cytoplasm. It catalyses the reaction GTP + H2O = GDP + phosphate + H(+). Involved in targeting and insertion of nascent membrane proteins into the cytoplasmic membrane. Binds to the hydrophobic signal sequence of the ribosome-nascent chain (RNC) as it emerges from the ribosomes. The SRP-RNC complex is then targeted to the cytoplasmic membrane where it interacts with the SRP receptor FtsY. This is Signal recognition particle 54 kDa protein from Saccharolobus islandicus (strain M.16.27) (Sulfolobus islandicus).